A 366-amino-acid polypeptide reads, in one-letter code: 5-formaminoimidazole-4-carboxamide-1-(beta)-D-ribofuranosyl 5'-monophosphate synthetase (366 aa).

2 residues coordinate 5-amino-1-(5-phospho-beta-D-ribosyl)imidazole-4-carboxamide: histidine 27 and serine 96. Positions 131–357 constitute an ATP-grasp domain; it reads RKWLEDAGVP…IAREIKEAVK (227 aa). ATP is bound by residues 154-208 and glutamate 239; that span reads PVIV…VRFY. Asparagine 263 contributes to the 5-amino-1-(5-phospho-beta-D-ribosyl)imidazole-4-carboxamide binding site. Residues glutamate 302 and glutamate 315 each contribute to the Mg(2+) site.

The protein belongs to the phosphohexose mutase family. Mg(2+) serves as cofactor. Mn(2+) is required as a cofactor.

It catalyses the reaction 5-amino-1-(5-phospho-beta-D-ribosyl)imidazole-4-carboxamide + formate + ATP = 5-formamido-1-(5-phospho-D-ribosyl)imidazole-4-carboxamide + ADP + phosphate. The protein operates within purine metabolism; IMP biosynthesis via de novo pathway; 5-formamido-1-(5-phospho-D-ribosyl)imidazole-4-carboxamide from 5-amino-1-(5-phospho-D-ribosyl)imidazole-4-carboxamide (formate route): step 1/1. In terms of biological role, catalyzes the ATP- and formate-dependent formylation of 5-aminoimidazole-4-carboxamide-1-beta-d-ribofuranosyl 5'-monophosphate (AICAR) to 5-formaminoimidazole-4-carboxamide-1-beta-d-ribofuranosyl 5'-monophosphate (FAICAR) in the absence of folates. This is 5-formaminoimidazole-4-carboxamide-1-(beta)-D-ribofuranosyl 5'-monophosphate synthetase from Korarchaeum cryptofilum (strain OPF8).